The primary structure comprises 382 residues: MQDAAPRLTFTLRDEERLMMKIGVFVPIGNNGWLISTHAPQYMPTFELNKAIVQKAEHYHFDFALSMIKLRGFGGKTEFWDHNLESFTLMAGLAAVTSRIQIYATAATLTLPPAIVARMAATIDSISGGRFGVNLVTGWQKPEYEQMGIWPGDDYFSRRYDYLTEYVQVLRDLWGTGKSDFKGDFFTMNDCRVSPQPSVPMKVICAGQSDAGMAFSAQYADFNFCFGKGVNTPTAFAPTAARMKQAAEQTGRDVGSYVLFMVIADETDDAARAKWEHYKAGADEEALSWLTEQSQKDTRSGTDTNVRQMADPTSAVNINMGTLVGSYASVARMLDEVASVPGAEGVLLTFDDFLSGIETFGERIQPLMQCRAHLPALTQEVA.

FMN is bound by residues 68 to 69, Asn-134, Glu-143, 159 to 160, and Ser-209; these read IK and RY.

Belongs to the NtaA/SnaA/DszA monooxygenase family. RutA subfamily.

It catalyses the reaction uracil + FMNH2 + NADH + O2 = (Z)-3-ureidoacrylate + FMN + NAD(+) + H2O + H(+). The enzyme catalyses thymine + FMNH2 + NADH + O2 = (Z)-2-methylureidoacrylate + FMN + NAD(+) + H2O + H(+). In terms of biological role, catalyzes the pyrimidine ring opening between N-3 and C-4 by an unusual flavin hydroperoxide-catalyzed mechanism, adding oxygen atoms in the process to yield ureidoacrylate peracid, that immediately reacts with FMN forming ureidoacrylate and FMN-N(5)-oxide. The FMN-N(5)-oxide reacts spontaneously with NADH to produce FMN. Requires the flavin reductase RutF to regenerate FMN in vivo. In Escherichia coli (strain 55989 / EAEC), this protein is Pyrimidine monooxygenase RutA.